The chain runs to 312 residues: Pre-mRNA-splicing factor 38A (312 aa).

Residues 1–179 (MANRTVKDAH…VLEETEQLDP (179 aa)) are N-terminal protein interaction domain. Residues 180-312 (RVSALEEDMD…SHKKSRRGNE (133 aa)) are disordered. Residues 184 to 201 (LEEDMDDVESSEEEEDDD) are compositionally biased toward acidic residues. A compositionally biased stretch (basic and acidic residues) spans 202-223 (EKGRDPSPEHHRRNYRDLDRPR). Composition is skewed to basic residues over residues 224–294 (RSPS…RSHS) and 301–312 (KKSHKKSRRGNE).

It belongs to the PRP38 family. As to quaternary structure, component of the spliceosome B complex.

The protein resides in the nucleus. Functionally, involved in pre-mRNA splicing as a component of the spliceosome. The sequence is that of Pre-mRNA-splicing factor 38A (prpf38a) from Xenopus laevis (African clawed frog).